The sequence spans 185 residues: Coiled-coil domain-containing protein 32 (185 aa).

The stretch at 78–98 forms a coiled coil; it reads LASLEKKLRRIKGLNQEVTSK. The segment at 159 to 185 is disordered; sequence IPPESQVEKPVAEDEPAAGDKPAAAEQ.

In terms of assembly, interacts with AP2S1; the interaction is direct and mediates association with adaptor protein complex 2 (AP-2).

It is found in the membrane. The protein resides in the coated pit. Its function is as follows. Regulates clathrin-mediated endocytsois of cargos such as transferrin probably through the association and modulation of adaptor protein complex 2 (AP-2). Has a role in ciliogenesis. Required for proper cephalic and left/right axis development. This chain is Coiled-coil domain-containing protein 32, found in Homo sapiens (Human).